Reading from the N-terminus, the 199-residue chain is ATP-dependent Clp protease proteolytic subunit 2 (199 aa).

S98 functions as the Nucleophile in the catalytic mechanism. H123 is an active-site residue.

This sequence belongs to the peptidase S14 family. Fourteen ClpP subunits assemble into 2 heptameric rings which stack back to back to give a disk-like structure with a central cavity, resembling the structure of eukaryotic proteasomes.

The protein localises to the cytoplasm. The catalysed reaction is Hydrolysis of proteins to small peptides in the presence of ATP and magnesium. alpha-casein is the usual test substrate. In the absence of ATP, only oligopeptides shorter than five residues are hydrolyzed (such as succinyl-Leu-Tyr-|-NHMec, and Leu-Tyr-Leu-|-Tyr-Trp, in which cleavage of the -Tyr-|-Leu- and -Tyr-|-Trp bonds also occurs).. Its function is as follows. Cleaves peptides in various proteins in a process that requires ATP hydrolysis. Has a chymotrypsin-like activity. Plays a major role in the degradation of misfolded proteins. This Treponema pallidum (strain Nichols) protein is ATP-dependent Clp protease proteolytic subunit 2.